A 140-amino-acid chain; its full sequence is MSFLGLGGQNPNGPSNPQKLLAAEAELDMVTDMFNRLVESCHEKCIKADYSSGDLNANEGLCLDRCVAKYFDVNTKVGEVSMRGADGNYGLEDTANTVHAEAWKQRILHGPTLNVKYVHRIKVHEIVRLTMVYLAPWHFN.

Positions cysteine 41 to cysteine 66 match the Twin CX3C motif motif. Intrachain disulfides connect cysteine 41–cysteine 66 and cysteine 45–cysteine 62.

Belongs to the small Tim family. As to quaternary structure, heterohexamer; composed of 3 copies of TIM9 and 3 copies of TIM10, named soluble 70 kDa complex. Associates directly with the TIM22 complex, whose core is composed of TIM22 and TIM54. Interacts with the transmembrane regions of multi-pass transmembrane proteins in transit.

Its subcellular location is the mitochondrion inner membrane. Its function is as follows. Mitochondrial intermembrane chaperone that participates in the import and insertion of multi-pass transmembrane proteins into the mitochondrial inner membrane. Also required for the transfer of beta-barrel precursors from the TOM complex to the sorting and assembly machinery (SAM complex) of the outer membrane. Acts as a chaperone-like protein that protects the hydrophobic precursors from aggregation and guide them through the mitochondrial intermembrane space. The sequence is that of Mitochondrial import inner membrane translocase subunit TIM10 (TIM10) from Yarrowia lipolytica (strain CLIB 122 / E 150) (Yeast).